Here is a 336-residue protein sequence, read N- to C-terminus: 4-hydroxy-2-oxovalerate aldolase (336 aa).

Residues 5-255 (IRIIDSTLRD…ETGVDLYKIM (251 aa)) enclose the Pyruvate carboxyltransferase domain. Position 13 to 14 (13 to 14 (RD)) interacts with substrate. Aspartate 14 is a binding site for Mn(2+). Histidine 17 (proton acceptor) is an active-site residue. 2 residues coordinate substrate: serine 167 and histidine 194. The Mn(2+) site is built by histidine 194 and histidine 196. Tyrosine 285 is a binding site for substrate.

Belongs to the 4-hydroxy-2-oxovalerate aldolase family.

The enzyme catalyses (S)-4-hydroxy-2-oxopentanoate = acetaldehyde + pyruvate. In Carboxydothermus hydrogenoformans (strain ATCC BAA-161 / DSM 6008 / Z-2901), this protein is 4-hydroxy-2-oxovalerate aldolase (mhpE).